We begin with the raw amino-acid sequence, 878 residues long: Phosphoenolpyruvate carboxylase (878 aa).

Residues H138 and K545 contribute to the active site.

It belongs to the PEPCase type 1 family. The cofactor is Mg(2+).

It catalyses the reaction oxaloacetate + phosphate = phosphoenolpyruvate + hydrogencarbonate. Its function is as follows. Forms oxaloacetate, a four-carbon dicarboxylic acid source for the tricarboxylic acid cycle. The sequence is that of Phosphoenolpyruvate carboxylase from Shewanella halifaxensis (strain HAW-EB4).